Reading from the N-terminus, the 359-residue chain is Peptide chain release factor 1 (359 aa).

Q235 carries the post-translational modification N5-methylglutamine.

The protein belongs to the prokaryotic/mitochondrial release factor family. Methylated by PrmC. Methylation increases the termination efficiency of RF1.

It localises to the cytoplasm. Its function is as follows. Peptide chain release factor 1 directs the termination of translation in response to the peptide chain termination codons UAG and UAA. In Ehrlichia ruminantium (strain Gardel), this protein is Peptide chain release factor 1.